Here is a 90-residue protein sequence, read N- to C-terminus: Arminin 45266 (90 aa).

A signal peptide spans 1–20 (MKSASLILFVALVALTYARS). Positions 21–59 (YEDVKEEIKNEVEKEILDDLEEENDELDDNTQEVNDPRA) are excised as a propeptide. T87 carries the threonine amide modification.

It belongs to the arminin family. In terms of tissue distribution, expressed in entodermal epithelium along the body column.

The protein localises to the secreted. It is found in the target cell membrane. Its function is as follows. Antimicrobial peptide with a broad-spectrum antimicrobial activity. Keeps its antibacterial activity under a wide range of salt concentrations that mimic physiological conditions of human blood, which is surprising, since Hydra is an obligate freshwater animal with nearly no salt tolerance. Does not affect red blood cells. In Hydra vulgaris (Hydra), this protein is Arminin 45266.